The chain runs to 451 residues: Gamma-aminobutyric acid receptor subunit alpha-2 (451 aa).

The first 28 residues, 1-28 (MKTKLSTCNVWSLLLVLLVWDPVRLVLA), serve as a signal peptide directing secretion. Residues 29–249 (NIQEDEAKNN…MTAHFHLKRK (221 aa)) are Extracellular-facing. Residue asparagine 38 is glycosylated (N-linked (GlcNAc...) asparagine). Arginine 94 contacts 4-aminobutanoate. Asparagine 138 carries N-linked (GlcNAc...) asparagine glycosylation. Threonine 157 serves as a coordination point for 4-aminobutanoate. Cysteine 166 and cysteine 180 are disulfide-bonded. A helical transmembrane segment spans residues 250 to 270 (IGYFVIQTYLPCIMTVILSQV). Residues 271–280 (SFWLNRESVP) lie on the Cytoplasmic side of the membrane. The chain crosses the membrane as a helical span at residues 281–300 (ARTVFGVTTVLTMTTLSISA). The Extracellular segment spans residues 301–311 (RNSLPKVAYAT). Residues 312–332 (AMDWFIAVCYAFVFSALIEFA) form a helical membrane-spanning segment. Residues 333-420 (TVNYFTKRGW…FNSVSKIDRM (88 aa)) are Cytoplasmic-facing. Residues 389–408 (KSATTPEPNKKPENKPAEAK) are disordered. Positions 396–408 (PNKKPENKPAEAK) are enriched in basic and acidic residues. Residues 421-441 (SRIVFPVLFGTFNLVYWATYL) traverse the membrane as a helical segment. Residues 442–451 (NREPVLGVSP) are Extracellular-facing.

This sequence belongs to the ligand-gated ion channel (TC 1.A.9) family. Gamma-aminobutyric acid receptor (TC 1.A.9.5) subfamily. GABRA2 sub-subfamily. In terms of assembly, heteropentamer, formed by a combination of alpha (GABRA1-6), beta (GABRB1-3), gamma (GABRG1-3), delta (GABRD), epsilon (GABRE), rho (GABRR1-3), pi (GABRP) and theta (GABRQ) subunits, each subunit exhibiting distinct physiological and pharmacological properties. Interacts with UBQLN1. Interacts with KIF21B. Interacts with LHFPL4. Interacts with SHISA7; interaction leads to the regulation of GABA(A) receptor trafficking, channel deactivation kinetics and pharmacology. In terms of processing, glycosylated.

Its subcellular location is the postsynaptic cell membrane. The protein resides in the cell membrane. It localises to the cytoplasmic vesicle membrane. It is found in the cell projection. The protein localises to the dendrite. The enzyme catalyses chloride(in) = chloride(out). Its activity is regulated as follows. Activated by pentobarbital. Inhibited by the antagonist bicuculline. Alpha subunit of the heteropentameric ligand-gated chloride channel gated by gamma-aminobutyric acid (GABA), a major inhibitory neurotransmitter in the brain. GABA-gated chloride channels, also named GABA(A) receptors (GABAAR), consist of five subunits arranged around a central pore and contain GABA active binding site(s) located at the alpha and beta subunit interface(s). When activated by GABA, GABAARs selectively allow the flow of chloride anions across the cell membrane down their electrochemical gradient. Chloride influx into the postsynaptic neuron following GABAAR opening decreases the neuron ability to generate a new action potential, thereby reducing nerve transmission. The alpha-2 subunit exhibits synaptogenic activity together with beta-2 and very little to no activity together with beta-3, the gamma-2 subunit being necessary but not sufficient to induce rapid synaptic contacts formation. This chain is Gamma-aminobutyric acid receptor subunit alpha-2, found in Mus musculus (Mouse).